The chain runs to 367 residues: Pre-small/secreted glycoprotein (367 aa).

An N-terminal signal peptide occupies residues 1-33 (MGSGYQLLQLPRERFRKTSFLVWVIILFQRAIS). N-linked (GlcNAc...) asparagine; by host glycosylation occurs at asparagine 41. Cystine bridges form between cysteine 109-cysteine 136 and cysteine 122-cysteine 148. N-linked (GlcNAc...) asparagine; by host glycosylation is found at asparagine 205, asparagine 239, asparagine 258, and asparagine 269.

Belongs to the filoviruses glycoprotein family. Homodimer; disulfide-linked. The homodimers are linked by two disulfide bonds in a parallel orientation. As to quaternary structure, monomer. In terms of processing, this precursor is processed into mature sGP and delta-peptide by host furin or furin-like proteases. The cleavage site corresponds to the furin optimal cleavage sequence [KR]-X-[KR]-R. N-glycosylated. Post-translationally, O-glycosylated.

It localises to the secreted. In terms of biological role, seems to possess an anti-inflammatory activity as it can reverse the barrier-decreasing effects of TNF alpha. Might therefore contribute to the lack of inflammatory reaction seen during infection in spite the of extensive necrosis and massive virus production. Does not seem to be involved in activation of primary macrophages. Does not seem to interact specifically with neutrophils. Its function is as follows. Viroporin that permeabilizes mammalian cell plasma membranes. It acts by altering permeation of ionic compounds and small molecules. This activity may lead to viral enterotoxic activity. This is Pre-small/secreted glycoprotein (GP) from Reston ebolavirus (strain Philippines-96) (REBOV).